Here is a 101-residue protein sequence, read N- to C-terminus: Movement protein (101 aa).

The chain crosses the membrane as a helical span at residues 30–50 (EVAILSFVALICIYLLYLWVL).

This sequence belongs to the mastrevirus movement protein family. Interacts with the capsid protein (CP). Part of a MP-CP-viral DNA complex.

It is found in the host membrane. Involved in the viral transport within, and between cells. In Maize streak virus genotype D (isolate Raw) (MSV), this protein is Movement protein.